The chain runs to 427 residues: Carboxyl-terminal-processing protease (427 aa).

Residues 1-31 (MGKRTRRFWALAFSLLMGALIYLGNTPSALA) form the signal peptide. The 83-residue stretch at 104 to 186 (NLQVTTTGEL…TKVSLEILSA (83 aa)) folds into the PDZ domain. Active-site charge relay system residues include serine 313, aspartate 324, and lysine 338.

The protein belongs to the peptidase S41A family.

The protein resides in the cellular thylakoid lumen. The enzyme catalyses The enzyme shows specific recognition of a C-terminal tripeptide, Xaa-Yaa-Zaa, in which Xaa is preferably Ala or Leu, Yaa is preferably Ala or Tyr, and Zaa is preferably Ala, but then cleaves at a variable distance from the C-terminus. A typical cleavage is -Ala-Ala-|-Arg-Ala-Ala-Lys-Glu-Asn-Tyr-Ala-Leu-Ala-Ala.. Functionally, cleavage of the 16 C-terminal residues from the D1 precursor of photosystem II (PSII). This proteolytic processing is necessary to allow the light-driven assembly of the oxygen-evolving cluster (a tetranuclear manganese), which is responsible for photosynthetic water oxidation. In Synechocystis sp. (strain ATCC 27184 / PCC 6803 / Kazusa), this protein is Carboxyl-terminal-processing protease (ctpA).